The following is an 843-amino-acid chain: Protein PLASTID MOVEMENT IMPAIRED 1 (843 aa).

Polar residues predominate over residues 30 to 58 (PQVSVGNRRTNSLALPRSSVPSLVTSADE). Disordered stretches follow at residues 30–65 (PQVSVGNRRTNSLALPRSSVPSLVTSADEVSTARAE) and 88–116 (LEVEEEENVTQSNRIVKKPEESSSGSGVK). A C2 NT-type domain is found at 131-284 (LVRIGMQKLS…ELALKLGFQI (154 aa)). Disordered stretches follow at residues 300-412 (FGMK…GTIG) and 450-472 (MMKDESDGGDGETESQRLDEEEQ). Positions 307-336 (KPKNFANSFGRKQSKTSFSVPSPKMTSRSE) are enriched in polar residues. S314 and S328 each carry phosphoserine. Residues 365 to 381 (PEEKPVQKNDKPEQRAE) show a composition bias toward basic and acidic residues. Residue T404 is modified to Phosphothreonine. The residue at position 407 (S407) is a Phosphoserine. T410 is subject to Phosphothreonine. Acidic residues predominate over residues 456-472 (DGGDGETESQRLDEEEQ). S507 bears the Phosphoserine mark.

Expressed in leaves, stems, cauline leaves, and flowers but not in roots. Present in leaves in both mesophyll and pavement cells.

Its subcellular location is the cytoplasm. In terms of biological role, necessary for chloroplast and nuclear photorelocation movements via the regulation of chloroplast-actin (cp-actin) filaments in mesophyll cells, and together with PMIR1, in pavement cells. Required component for both the low- and high-light-dependent chloroplast movement responses via an abscisic acid (ABA) pathway. Involved in the ABA response pathway during seed germination. Modulates ABA accumulation during periods of water deficit at the seedling stage. This Arabidopsis thaliana (Mouse-ear cress) protein is Protein PLASTID MOVEMENT IMPAIRED 1.